A 658-amino-acid polypeptide reads, in one-letter code: Glycogen debranching enzyme (658 aa).

The active-site Nucleophile is Asp336. Glu371 functions as the Proton donor in the catalytic mechanism.

The protein belongs to the glycosyl hydrolase 13 family.

It catalyses the reaction Hydrolysis of (1-&gt;6)-alpha-D-glucosidic linkages to branches with degrees of polymerization of three or four glucose residues in limit dextrin.. Its pathway is glycan degradation; glycogen degradation. Its function is as follows. Removes maltotriose and maltotetraose chains that are attached by 1,6-alpha-linkage to the limit dextrin main chain, generating a debranched limit dextrin. This chain is Glycogen debranching enzyme, found in Klebsiella pneumoniae subsp. pneumoniae (strain ATCC 700721 / MGH 78578).